The chain runs to 487 residues: N-succinylglutamate 5-semialdehyde dehydrogenase (487 aa).

Glycine 221–glycine 226 is a binding site for NAD(+). Active-site residues include glutamate 244 and cysteine 278.

This sequence belongs to the aldehyde dehydrogenase family. AstD subfamily.

The enzyme catalyses N-succinyl-L-glutamate 5-semialdehyde + NAD(+) + H2O = N-succinyl-L-glutamate + NADH + 2 H(+). Its pathway is amino-acid degradation; L-arginine degradation via AST pathway; L-glutamate and succinate from L-arginine: step 4/5. Catalyzes the NAD-dependent reduction of succinylglutamate semialdehyde into succinylglutamate. The sequence is that of N-succinylglutamate 5-semialdehyde dehydrogenase from Burkholderia vietnamiensis (strain G4 / LMG 22486) (Burkholderia cepacia (strain R1808)).